The sequence spans 512 residues: 2,3-bisphosphoglycerate-independent phosphoglycerate mutase (512 aa).

Mn(2+)-binding residues include Asp12 and Ser62. Catalysis depends on Ser62, which acts as the Phosphoserine intermediate. Residues His123, 154–155, Arg181, Arg187, 253–256, and Lys336 contribute to the substrate site; these read RD and RPDR. Residues Asp403, His407, Asp444, His445, and His462 each coordinate Mn(2+).

The protein belongs to the BPG-independent phosphoglycerate mutase family. Monomer. Mn(2+) is required as a cofactor.

The catalysed reaction is (2R)-2-phosphoglycerate = (2R)-3-phosphoglycerate. Its pathway is carbohydrate degradation; glycolysis; pyruvate from D-glyceraldehyde 3-phosphate: step 3/5. Functionally, catalyzes the interconversion of 2-phosphoglycerate and 3-phosphoglycerate. The sequence is that of 2,3-bisphosphoglycerate-independent phosphoglycerate mutase from Aster yellows witches'-broom phytoplasma (strain AYWB).